A 146-amino-acid chain; its full sequence is MGGTTDFVLSITIVLVILIIIAFIWYNFTGWSPFKYSKGNTVTFKTPDESSIAYMRFKNCVFTFTDPKGSLHSVDVTNVLNNMAKGFRDAQNPPSSFTLGGHCQAPLNAFSFILPGVNDRATVATADEAKKWENCDATLTGLQRII.

The helical transmembrane segment at 7-27 threads the bilayer; the sequence is FVLSITIVLVILIIIAFIWYN.

Belongs to the asfivirus E146L family.

Its subcellular location is the host membrane. It is found in the virion. This is an uncharacterized protein from Ornithodoros (relapsing fever ticks).